The following is a 185-amino-acid chain: Dual-action ribosomal maturation protein DarP (185 aa).

The protein belongs to the DarP family.

Its subcellular location is the cytoplasm. Its function is as follows. Member of a network of 50S ribosomal subunit biogenesis factors which assembles along the 30S-50S interface, preventing incorrect 23S rRNA structures from forming. Promotes peptidyl transferase center (PTC) maturation. The chain is Dual-action ribosomal maturation protein DarP from Vibrio vulnificus (strain YJ016).